We begin with the raw amino-acid sequence, 515 residues long: Putative ammonium transporter 2 (515 aa).

A run of 12 helical transmembrane segments spans residues 34–54 (GVWMMASSFIIFTMTAGFGLL), 72–92 (VFDVIFGGLAYWMFGYGLTFG), 124–144 (GISYSLFIFQMSFATTTSTIV), 156–176 (SHCFISFFITLVHSVAGHWVW), 191–211 (AGCSAVHLVGGVSGLVATLYL), 226–246 (VSDPTKAILGFLMIWWGWLAF), 266–286 (AVGTILASAGGGVVTVIITRL), 291–311 (IQMDMLIDGMLASLVASTGGC), 321–337 (LVGAIGSSLALAAYPVT), 346–366 (VGVFPVHVVGSIWGMIAPAIF), 381–401 (FQTSDEINGLLYGGGFYLLFL), and 404–424 (FVILVIGTYSAICAFIILFLI).

This sequence belongs to the ammonia transporter channel (TC 1.A.11.2) family.

The protein localises to the membrane. Functionally, involved in the uptake of ammonia. Implicated in aging. This is Putative ammonium transporter 2 (amt-2) from Caenorhabditis elegans.